We begin with the raw amino-acid sequence, 149 residues long: Large ribosomal subunit protein bL9 (149 aa).

Belongs to the bacterial ribosomal protein bL9 family.

Its function is as follows. Binds to the 23S rRNA. The chain is Large ribosomal subunit protein bL9 from Thermotoga sp. (strain RQ2).